Reading from the N-terminus, the 360-residue chain is uncharacterized protein (360 aa).

Residues 11–40 (KEEVWDTNRCSGCGACVAVCPVNNLYFREE) enclose the 4Fe-4S ferredoxin-type domain.

Belongs to the FrhB family.

This is an uncharacterized protein from Methanocaldococcus jannaschii (strain ATCC 43067 / DSM 2661 / JAL-1 / JCM 10045 / NBRC 100440) (Methanococcus jannaschii).